A 74-amino-acid polypeptide reads, in one-letter code: Mitotic-spindle organizing protein 1 (74 aa).

The protein belongs to the MOZART1 family. In terms of assembly, part of the gamma-tubulin complex.

It is found in the cytoplasm. It localises to the cytoskeleton. Its subcellular location is the microtubule organizing center. The protein resides in the spindle pole body. Its function is as follows. Required for gamma-tubulin complex recruitment to the microtubule organizing center (MTOC). This chain is Mitotic-spindle organizing protein 1, found in Emericella nidulans (strain FGSC A4 / ATCC 38163 / CBS 112.46 / NRRL 194 / M139) (Aspergillus nidulans).